The following is a 550-amino-acid chain: Methyl-coenzyme M reductase subunit alpha (550 aa).

Glutamine 147 is a binding site for coenzyme F430. Coenzyme B is bound by residues arginine 225, 256-257 (KH), and arginine 270. Histidine 257 bears the Pros-methylhistidine mark. Arginine 271 is subject to 5-methylarginine. Position 333 (tyrosine 333) interacts with coenzyme M. The residue at position 400 (glutamine 400) is a 2-methylglutamine. Coenzyme M is bound at residue tyrosine 444. At glycine 445 the chain carries 1-thioglycine. Aspartate 450 carries the post-translational modification (Z)-2,3-didehydroaspartate. Cysteine 452 carries the post-translational modification S-methylcysteine.

Belongs to the methyl-coenzyme M reductase alpha subunit family. MCR is a hexamer of two alpha, two beta, and two gamma chains, forming a dimer of heterotrimers. The cofactor is coenzyme F430. In terms of processing, the alpha subunit contains six modified amino acids near the active site region. Is methylated on His-257, Arg-271, Gln-400 and Cys-452, probably by the action of specific S-adenosylmethionine-dependent methyltransferases. Also contains a thioglycine at position 445, forming a thiopeptide bond. Contains a didehydroaspartate residue at position 450. The methylation on C5 of Arg-271 is a post-translational methylation not essential in vivo, but which plays a role for the stability and structural integrity of MCR.

The protein resides in the cytoplasm. It carries out the reaction coenzyme B + methyl-coenzyme M = methane + coenzyme M-coenzyme B heterodisulfide. It participates in one-carbon metabolism; methyl-coenzyme M reduction; methane from methyl-coenzyme M: step 1/1. In terms of biological role, component of the methyl-coenzyme M reductase (MCR) I that catalyzes the reductive cleavage of methyl-coenzyme M (CoM-S-CH3 or 2-(methylthio)ethanesulfonate) using coenzyme B (CoB or 7-mercaptoheptanoylthreonine phosphate) as reductant which results in the production of methane and the mixed heterodisulfide of CoB and CoM (CoM-S-S-CoB). This is the final step in methanogenesis. The chain is Methyl-coenzyme M reductase subunit alpha (mcrA) from Methanothermobacter thermautotrophicus (strain ATCC 29096 / DSM 1053 / JCM 10044 / NBRC 100330 / Delta H) (Methanobacterium thermoautotrophicum).